The chain runs to 251 residues: L-ascorbate peroxidase 2, cytosolic (251 aa).

The active-site Proton acceptor is the His-43. His-163 lines the heme b pocket. 5 residues coordinate K(+): Thr-164, Thr-180, Asn-182, Ile-185, and Asp-187.

It belongs to the peroxidase family. Ascorbate peroxidase subfamily. Requires heme b as cofactor. As to expression, detected in bundle sheath cells, the photosynthetic cells that surround the phloem and xylem.

The protein resides in the cytoplasm. It catalyses the reaction L-ascorbate + H2O2 = L-dehydroascorbate + 2 H2O. Plays a key role in hydrogen peroxide removal. In Arabidopsis thaliana (Mouse-ear cress), this protein is L-ascorbate peroxidase 2, cytosolic.